Here is a 396-residue protein sequence, read N- to C-terminus: Phosphoglycerate kinase (396 aa).

Residues 21 to 23 (DLN), Arg-36, 59 to 62 (HFGR), Arg-118, and Arg-151 each bind substrate. ATP is bound by residues Lys-201, Glu-323, and 353-356 (GGDT).

It belongs to the phosphoglycerate kinase family. As to quaternary structure, monomer.

The protein localises to the cytoplasm. It carries out the reaction (2R)-3-phosphoglycerate + ATP = (2R)-3-phospho-glyceroyl phosphate + ADP. It participates in carbohydrate degradation; glycolysis; pyruvate from D-glyceraldehyde 3-phosphate: step 2/5. The sequence is that of Phosphoglycerate kinase from Brucella abortus biovar 1 (strain 9-941).